We begin with the raw amino-acid sequence, 147 residues long: Transcriptional regulator MraZ (147 aa).

SpoVT-AbrB domains lie at 5-47 (QQLR…SEKE) and 76-123 (TFEI…SKSK).

This sequence belongs to the MraZ family. Forms oligomers.

It localises to the cytoplasm. Its subcellular location is the nucleoid. The sequence is that of Transcriptional regulator MraZ from Mycoplasmopsis synoviae (strain 53) (Mycoplasma synoviae).